The chain runs to 566 residues: Tissue-type plasminogen activator (566 aa).

An N-terminal signal peptide occupies residues 1-21; sequence MMSAMKTEFLCVLLLCGAVFT. The propeptide occupies 22–33; sequence SPSQETYRRLRR. Positions 34 to 36 are cleaved as a propeptide — removed by plasmin; that stretch reads GAR. One can recognise a Fibronectin type-I domain in the interval 40–82; sequence VTCRDGKTQMTYRQHDSWLRPLLRGNQVEHCWCDGGRAQCHSV. 17 cysteine pairs are disulfide-bonded: C42–C72, C70–C79, C87–C98, C92–C109, C111–C120, C128–C209, C149–C191, C180–C204, C219–C300, C240–C282, C271–C295, C303–C434, C346–C362, C354–C423, C448–C523, C480–C496, and C513–C541. The segment at 43 to 53 is important for binding to annexin A2; it reads RDGKTQMTYRQ. The EGF-like domain maps to 83–121; the sequence is PVRSCSEPWCFNGGTCRQALYSSDFVCQCPEGFMGKLCE. 2 consecutive Kringle domains span residues 128-209 and 219-300; these read CYKD…TPAC and CYTG…VPQC. An N-linked (GlcNAc...) asparagine glycan is attached at N153. The 251-residue stretch at 315-565 folds into the Peptidase S1 domain; sequence IKGGLFADIT…YLDWIRDNTR (251 aa). Active-site charge relay system residues include H361 and D410. A glycan (N-linked (GlcNAc...) asparagine) is linked at N487. The Charge relay system role is filled by S517.

Belongs to the peptidase S1 family. Heterodimer of chain A and chain B held by a disulfide bond. Binds to fibrin with high affinity. This interaction leads to an increase in the catalytic efficiency of the enzyme due to an increase in affinity for plasminogen. Similarly, binding to heparin increases the activation of plasminogen. Binds to annexin A2, cytokeratin-8, fibronectin and laminin. Binds to mannose receptor and the low-density lipoprotein receptor-related protein (LRP1); these proteins are involved in TPA clearance. Binds LRP1B; binding is followed by internalization and degradation. Forms heterodimer with SERPINA5. Interacts with SERPINE1. In complex with SERPINE1, interacts with SORL1. The single chain, almost fully active enzyme, can be further processed into a two-chain fully active form by a cleavage after Arg-314 catalyzed by plasmin, tissue kallikrein or factor Xa.

Its subcellular location is the secreted. The protein localises to the extracellular space. It carries out the reaction Specific cleavage of Arg-|-Val bond in plasminogen to form plasmin.. Inhibited by SERPINA5. Inhibited by SERPINE1. In terms of biological role, converts the abundant, but inactive, zymogen plasminogen to plasmin by hydrolyzing a single Arg-Val bond in plasminogen. By controlling plasmin-mediated proteolysis, it plays an important role in tissue remodeling and degradation, in cell migration and many other physiopathological events. During oocyte activation, plays a role in cortical granule reaction in the zona reaction, which contributes to the block to polyspermy. The chain is Tissue-type plasminogen activator (PLAT) from Bos taurus (Bovine).